A 156-amino-acid chain; its full sequence is Ribosome maturation factor RimP (156 aa).

The protein belongs to the RimP family.

The protein localises to the cytoplasm. Functionally, required for maturation of 30S ribosomal subunits. The sequence is that of Ribosome maturation factor RimP from Prochlorococcus marinus (strain NATL2A).